A 464-amino-acid chain; its full sequence is Non-structural protein NS-S (464 aa).

This sequence belongs to the tospovirus NS-S protein family. Interacts with host MYC2.

In terms of biological role, multifunctional protein that plays two independent roles: viral suppressor of host RNAi (VSR) and viral inducer of host attractiveness to insect vectors (VIA). Acts as a suppressor of RNA-mediated gene silencing, also known as post-transcriptional gene silencing (PTGS), a mechanism of plant viral defense that limits the accumulation of viral RNAs. Also inhibits signal transduction by the phytohormone jasmonate, making the infected plant more attractive to aphids, which are the second host to play a role as a dissemination vector. Acts by binding to and inhibiting MYC2 transcription factor. In Frankliniella occidentalis (Western flower thrips), this protein is Non-structural protein NS-S (NSS).